Here is a 128-residue protein sequence, read N- to C-terminus: Aspartate 1-decarboxylase (128 aa).

Serine 25 serves as the catalytic Schiff-base intermediate with substrate; via pyruvic acid. Position 25 is a pyruvic acid (Ser) (serine 25). Position 57 (threonine 57) interacts with substrate. Tyrosine 58 (proton donor) is an active-site residue. 73–75 (GSA) provides a ligand contact to substrate.

This sequence belongs to the PanD family. In terms of assembly, heterooctamer of four alpha and four beta subunits. Requires pyruvate as cofactor. Is synthesized initially as an inactive proenzyme, which is activated by self-cleavage at a specific serine bond to produce a beta-subunit with a hydroxyl group at its C-terminus and an alpha-subunit with a pyruvoyl group at its N-terminus.

It is found in the cytoplasm. The enzyme catalyses L-aspartate + H(+) = beta-alanine + CO2. It functions in the pathway cofactor biosynthesis; (R)-pantothenate biosynthesis; beta-alanine from L-aspartate: step 1/1. Its function is as follows. Catalyzes the pyruvoyl-dependent decarboxylation of aspartate to produce beta-alanine. This Burkholderia lata (strain ATCC 17760 / DSM 23089 / LMG 22485 / NCIMB 9086 / R18194 / 383) protein is Aspartate 1-decarboxylase.